Consider the following 504-residue polypeptide: L-carnitine/gamma-butyrobetaine antiporter (504 aa).

12 helical membrane passes run 10 to 30 (IEPKVFFPPLIIVGILCWLTV), 51 to 71 (WGWAFEWYMVVMLFGWFWLVF), 92 to 112 (IFMMFASCTSAAVLFWGSIEI), 143 to 163 (GPLPWATYSFLSVAFAYFFFV), 195 to 215 (FYLVALIFAMGTSLGLATPLV), 231 to 251 (LDAIIITCWIILNAICVACGL), 263 to 283 (SYLSFLMLGWVFIVSGASFIM), 316 to 336 (WTVFYWAWWVIYAIQMSIFLA), 347 to 367 (LCFGMVLGLTASTWILWTVLG), 398 to 418 (WAALPLSTATMWGFFILCFIA), 446 to 466 (LLVRIGWSVLVGIIGIVLLAL), and 475 to 495 (AIIAGGCPLFFVNIMVTLSFI).

Belongs to the BCCT transporter (TC 2.A.15) family. CaiT subfamily. Homotrimer.

It localises to the cell inner membrane. It carries out the reaction 4-(trimethylamino)butanoate(in) + (R)-carnitine(out) = 4-(trimethylamino)butanoate(out) + (R)-carnitine(in). It participates in amine and polyamine metabolism; carnitine metabolism. Functionally, catalyzes the exchange of L-carnitine for gamma-butyrobetaine. The polypeptide is L-carnitine/gamma-butyrobetaine antiporter (Escherichia coli O6:K15:H31 (strain 536 / UPEC)).